Reading from the N-terminus, the 204-residue chain is Putative uracil phosphoribosyltransferase urg2 (204 aa).

5-phospho-alpha-D-ribose 1-diphosphate is bound by residues Arg-75, Arg-100, and 126–134; that span reads DPVMATGGT. Position 187 (Tyr-187) interacts with D-ribose 5-phosphate. Uracil contacts are provided by residues Leu-188 and 193–195; that span reads GDI. Asp-194 contributes to the 5-phospho-alpha-D-ribose 1-diphosphate binding site.

This sequence belongs to the UPRTase family. It depends on Mg(2+) as a cofactor.

The protein resides in the cytoplasm. Its subcellular location is the nucleus. It catalyses the reaction UMP + diphosphate = 5-phospho-alpha-D-ribose 1-diphosphate + uracil. The protein operates within pyrimidine metabolism; UMP biosynthesis via salvage pathway; UMP from uracil: step 1/1. With respect to regulation, allosterically activated by GTP. Catalyzes the conversion of uracil and 5-phospho-alpha-D-ribose 1-diphosphate (PRPP) to UMP and diphosphate. The protein is Putative uracil phosphoribosyltransferase urg2 of Schizosaccharomyces pombe (strain 972 / ATCC 24843) (Fission yeast).